A 612-amino-acid chain; its full sequence is FAD-linked oxidoreductase notD' (612 aa).

Positions Met-1 to Gly-19 are cleaved as a signal peptide. N-linked (GlcNAc...) asparagine glycans are attached at residues Asn-50, Asn-86, and Asn-109. The region spanning Gly-124–Ala-307 is the FAD-binding PCMH-type domain. Residues Asn-311 and Asn-396 are each glycosylated (N-linked (GlcNAc...) asparagine).

Belongs to the oxygen-dependent FAD-linked oxidoreductase family. Requires FAD as cofactor.

It participates in alkaloid biosynthesis. Its function is as follows. FAD-linked oxidoreductase; part of the gene cluster that mediates the biosynthesis of notoamide, a fungal indole alkaloid that belongs to a family of natural products containing a characteristic bicyclo[2.2.2]diazaoctane core. The first step of notoamide biosynthesis involves coupling of L-proline and L-tryptophan by the bimodular NRPS notE', to produce cyclo-L-tryptophan-L-proline called brevianamide F. The reverse prenyltransferase notF' then acts as a deoxybrevianamide E synthase and converts brevianamide F to deoxybrevianamide E via reverse prenylation at C-2 of the indole ring leading to the bicyclo[2.2.2]diazaoctane core. Deoxybrevianamide E is further hydroxylated at C-6 of the indole ring, likely catalyzed by the cytochrome P450 monooxygenase notG', to yield 6-hydroxy-deoxybrevianamide E. 6-hydroxy-deoxybrevianamide E is a specific substrate of the prenyltransferase notC' for normal prenylation at C-7 to produce 6-hydroxy-7-prenyl-deoxybrevianamide, also called notoamide S. As the proposed pivotal branching point in notoamide biosynthesis, notoamide S can be diverted to notoamide E through an oxidative pyran ring closure putatively catalyzed by either notH' cytochrome P450 monooxygenase or the notD' FAD-linked oxidoreductase. This step would be followed by an indole 2,3-epoxidation-initiated pinacol-like rearrangement catalyzed by the notB' FAD-dependent monooxygenase leading to the formation of notoamide C and notoamide D. On the other hand notoamide S is converted to notoamide T by notH' (or notD'), a bifunctional oxidase that also functions as the intramolecular Diels-Alderase responsible for generation of (-)-notoamide T. To generate antipodal (+)-notoaminide T, notH (or notD) in Aspergillus strain MF297-2 is expected to catalyze a Diels-Alder reaction leading to the opposite stereochemistry. The remaining oxidoreductase notD' (or notH') likely catalyzes the oxidative pyran ring formation to yield (-)-stephacidin A. The FAD-dependent monooxygenase notI' is highly similar to notB' and is predicted to catalyze a similar conversion from (-)-stephacidin A to (+)-notoamide B via the 2,3-epoxidation of (-)-stephacidin A followed by a pinacol-type rearrangement. Finally, it remains unclear which enzyme could be responsible for the final hydroxylation steps leading to notoamide A and sclerotiamide. In Aspergillus versicolor, this protein is FAD-linked oxidoreductase notD'.